A 117-amino-acid polypeptide reads, in one-letter code: Ribulose bisphosphate carboxylase small subunit 1 (117 aa).

This sequence belongs to the RuBisCO small chain family. In terms of assembly, heterohexadecamer of 8 large and 8 small subunits.

Functionally, ruBisCO catalyzes two reactions: the carboxylation of D-ribulose 1,5-bisphosphate, the primary event in carbon dioxide fixation, as well as the oxidative fragmentation of the pentose substrate. Both reactions occur simultaneously and in competition at the same active site. Although the small subunit is not catalytic it is essential for maximal activity. This is Ribulose bisphosphate carboxylase small subunit 1 from Hydrogenovibrio marinus.